Here is a 515-residue protein sequence, read N- to C-terminus: Heavy metal-associated isoprenylated plant protein 41 (515 aa).

The 69-residue stretch at 376–444 (KQRIVLKMDM…KVCMTTIITV (69 aa)) folds into the HMA domain. Cys-512 bears the Cysteine methyl ester mark. Cys-512 is lipidated: S-farnesyl cysteine. The propeptide at 513-515 (RIL) is removed in mature form.

It belongs to the HIPP family.

Its function is as follows. Heavy-metal-binding protein. This is Heavy metal-associated isoprenylated plant protein 41 from Arabidopsis thaliana (Mouse-ear cress).